Here is a 501-residue protein sequence, read N- to C-terminus: Protein MGF 505-4R (501 aa).

The protein belongs to the asfivirus MGF 505 family.

Functionally, plays a role in virus cell tropism, and may be required for efficient virus replication in macrophages. The polypeptide is Protein MGF 505-4R (African swine fever virus (isolate Tick/South Africa/Pretoriuskop Pr4/1996) (ASFV)).